The chain runs to 27 residues: Cupiennin-3b (27 aa).

Glu27 carries the post-translational modification Glutamic acid 1-amide.

In terms of tissue distribution, expressed by the venom gland.

The protein resides in the secreted. This Cupiennius salei (American wandering spider) protein is Cupiennin-3b.